Here is a 176-residue protein sequence, read N- to C-terminus: RNA 2',3'-cyclic phosphodiesterase (176 aa).

His-43 (proton donor) is an active-site residue. 2 consecutive short sequence motifs (HXTX) follow at residues 43 to 46 and 125 to 128; these read HLTL and HITL. The active-site Proton acceptor is the His-125.

The protein belongs to the 2H phosphoesterase superfamily. ThpR family. Monomer.

It carries out the reaction a 3'-end 2',3'-cyclophospho-ribonucleotide-RNA + H2O = a 3'-end 2'-phospho-ribonucleotide-RNA + H(+). In terms of biological role, hydrolyzes RNA 2',3'-cyclic phosphodiester to an RNA 2'-phosphomonoester. In vitro, can also ligate 5' and 3' half-tRNA molecules with 2',3'-cyclic phosphate and 5'-hydroxyl termini, respectively, to the product containing the 2'-5' phosphodiester linkage. This reaction does not require ATP and is reversible. The polypeptide is RNA 2',3'-cyclic phosphodiesterase (Escherichia coli (strain K12)).